We begin with the raw amino-acid sequence, 392 residues long: MYIHHLALRDFRNYRRQDVALSPTTILLYGPNAAGKTSLLEAIFYLATTRSPRLSSDRDLVRWDAVGEAGAPPFARIAADVERRIGPVRLEILVQRRLDDGGQPLNGAQKLVRIDKRPARAIDLIGQLRVVLFTPTDVMLVDGPPAERRRYLDITLSQLDPHYVRTLAYYQKILLQRNSLLRAWREQRRLPRNVDAELGYWDQELAAAGGYLLAERLRAVVELSALAGSIYRKISGGEHELQIEYIASCDLDAARDAGSLAERLRLAFAAQRTDELARGQTLCGPHRDDLVFNVAGVNLGRYGSRGQQRTIALALKIGEAELMQQRGGDAPVLLLDDVLSELDNRRRMHLLDLILRPQQQTLLTATNLSDFSADFLAAARRFRVEDGQLFAG.

Residue 30–37 participates in ATP binding; the sequence is GPNAAGKT.

It belongs to the RecF family.

It is found in the cytoplasm. The RecF protein is involved in DNA metabolism; it is required for DNA replication and normal SOS inducibility. RecF binds preferentially to single-stranded, linear DNA. It also seems to bind ATP. In Chloroflexus aggregans (strain MD-66 / DSM 9485), this protein is DNA replication and repair protein RecF.